Reading from the N-terminus, the 397-residue chain is Zinc finger transcription factor family protein 30 (397 aa).

A disordered region spans residues 1 to 40 (MKLEDDKIHSPTNTEEEGYGSDVEVENGTDISGSKGGSGV). The segment covering 14–27 (TEEEGYGSDVEVEN) has biased composition (acidic residues). 3 consecutive C2H2-type zinc fingers follow at residues 51-74 (FRCSICSKVFCHSSSLSRHRMQAH), 78-102 (YKCTVCRKDISSSESLRTHMFKQHH), and 107-125 (YMCRCCNWAFPDKSLLHIH).

It localises to the nucleus. This is Zinc finger transcription factor family protein 30 (ztf-30) from Caenorhabditis elegans.